The following is a 485-amino-acid chain: MDLTKLTAHELKDMLSNKEVKAEEITKAFLDRINLVDNKLGAYLYVSEEEAIKKAKEIDVKIEKNEELKALSGIPIGIKDNINVKGMQNTCASKILEGYTSPYDAHVTEKIKQEEGIILGKLNMDEFAMGSSTENSAFKLAKNPWDLERVPGGSSGGSAVAVAGSEATLSLGTDTGGSVRQPASFCGVVGLKPTYGRISRSGVVAFGSTLDQVGPMGKDVEDCALLTSVIAGLDKKDFTTVDKEVPDYKKSLTKDIKGKRIGIPKEFFGDGLDKNIRKSVEEAIKVLEANGAEVKPCSLPLMDYALSAYYIISSAEASSNLARFDGIRYGYRSKNFKDAQDIYLKSRSEGFGDEVKRRIMLGTYVLSAGYYDAYYKKALKVRKLIKDDFQRVFKDFDAIVSPTSPTTAFKVGEKKDDVMSMYLSDIYTVPISVAGVPAISLPCGMVDGLPVGLQIISDYFKEDVLFNLAYSYEQSVDFYKMRADF.

Active-site charge relay system residues include Lys79 and Ser154. Residue Ser178 is the Acyl-ester intermediate of the active site.

It belongs to the amidase family. GatA subfamily. In terms of assembly, heterotrimer of A, B and C subunits.

The catalysed reaction is L-glutamyl-tRNA(Gln) + L-glutamine + ATP + H2O = L-glutaminyl-tRNA(Gln) + L-glutamate + ADP + phosphate + H(+). Allows the formation of correctly charged Gln-tRNA(Gln) through the transamidation of misacylated Glu-tRNA(Gln) in organisms which lack glutaminyl-tRNA synthetase. The reaction takes place in the presence of glutamine and ATP through an activated gamma-phospho-Glu-tRNA(Gln). The sequence is that of Glutamyl-tRNA(Gln) amidotransferase subunit A from Clostridium botulinum (strain Okra / Type B1).